Here is a 174-residue protein sequence, read N- to C-terminus: Probable nicotinate-nucleotide adenylyltransferase (174 aa).

This sequence belongs to the NadD family.

It carries out the reaction nicotinate beta-D-ribonucleotide + ATP + H(+) = deamido-NAD(+) + diphosphate. The protein operates within cofactor biosynthesis; NAD(+) biosynthesis; deamido-NAD(+) from nicotinate D-ribonucleotide: step 1/1. Catalyzes the reversible adenylation of nicotinate mononucleotide (NaMN) to nicotinic acid adenine dinucleotide (NaAD). The sequence is that of Probable nicotinate-nucleotide adenylyltransferase from Helicobacter pylori (strain HPAG1).